A 336-amino-acid chain; its full sequence is Mitochondrial thiamine pyrophosphate carrier 1 (336 aa).

3 Solcar repeats span residues 11–98 (ISST…VNQV), 112–202 (SSGA…VKDS), and 221–323 (TKGW…SLSI). A run of 6 helical transmembrane segments spans residues 17–37 (MLCG…LDVV), 66–86 (GVTA…FYGA), 118–138 (FIAG…FDLF), 177–197 (GVSS…ASYG), 228–244 (TAGL…VFPL), and 298–315 (GFLV…ITMY).

Belongs to the mitochondrial carrier (TC 2.A.29) family.

The protein resides in the mitochondrion inner membrane. In terms of biological role, mitochondrial transporter that mediates uptake of thiamine pyrophosphate (ThPP) into mitochondria. The sequence is that of Mitochondrial thiamine pyrophosphate carrier 1 (TPC1) from Yarrowia lipolytica (strain CLIB 122 / E 150) (Yeast).